The sequence spans 335 residues: MPIRHCIVHLIDKKPDGSPAVLHARDTELGASDAIENLLADLNDSYNAKQGKAWGFFHGESGAYPLSGWLKQYLEQEKDFAAFSRVAVEHLQKLMEESNLSTGGHILFAHYQQGMTDYLAIALLHHSEGVAVNAELDVTPSRHLDLGQLHLAARINLSEWKNNQNSKQYISFIKGKNGKKVSDYFRDFIGCQEGVDGPGETRTLLKAFSDFVESEDLPEEAAREKTQTLVDYATTQTKLGEPVTLEELSSLIDEDRPKAFYDHIRNKDYGLSPEIPADKRTLNQFRRFTGRAEGLSISFEAHLLGDKVEYDEVAGTLIIKGLPTQLVDQLKRRKD.

This sequence belongs to the YejK family.

It localises to the cytoplasm. The protein localises to the nucleoid. The sequence is that of Nucleoid-associated protein PputW619_4243 from Pseudomonas putida (strain W619).